A 462-amino-acid polypeptide reads, in one-letter code: Glutamate--tRNA ligase 1 (462 aa).

The 'HIGH' region motif lies at 8-18; the sequence is PSPTGYLHIGG. Positions 236–240 match the 'KMSKS' region motif; that stretch reads KLSKR. K239 is an ATP binding site.

It belongs to the class-I aminoacyl-tRNA synthetase family. Glutamate--tRNA ligase type 1 subfamily. As to quaternary structure, monomer.

The protein localises to the cytoplasm. It carries out the reaction tRNA(Glu) + L-glutamate + ATP = L-glutamyl-tRNA(Glu) + AMP + diphosphate. Its function is as follows. Catalyzes the attachment of glutamate to tRNA(Glu) in a two-step reaction: glutamate is first activated by ATP to form Glu-AMP and then transferred to the acceptor end of tRNA(Glu). This is Glutamate--tRNA ligase 1 from Sulfurovum sp. (strain NBC37-1).